We begin with the raw amino-acid sequence, 304 residues long: Signal recognition particle receptor FtsY (304 aa).

Residues 109-116 (GVNGVGKT), 191-195 (DTAGR), and 255-258 (TKLD) contribute to the GTP site.

The protein belongs to the GTP-binding SRP family. FtsY subfamily. In terms of assembly, part of the signal recognition particle protein translocation system, which is composed of SRP and FtsY. Post-translationally, sensitive to endogenous proteolytic cleavage between residues 18 and 19 and between residues 86 and 87.

It localises to the cell membrane. The protein localises to the cytoplasm. The enzyme catalyses GTP + H2O = GDP + phosphate + H(+). In terms of biological role, involved in targeting and insertion of nascent membrane proteins into the cytoplasmic membrane. Acts as a receptor for the complex formed by the signal recognition particle (SRP) and the ribosome-nascent chain (RNC). This Thermus aquaticus protein is Signal recognition particle receptor FtsY.